A 138-amino-acid polypeptide reads, in one-letter code: Cysteine desulfuration protein SufE (138 aa).

Cys-51 functions as the Cysteine persulfide intermediate in the catalytic mechanism.

This sequence belongs to the SufE family. Homodimer. Interacts with SufS.

It localises to the cytoplasm. Its pathway is cofactor biosynthesis; iron-sulfur cluster biosynthesis. In terms of biological role, participates in cysteine desulfuration mediated by SufS. Cysteine desulfuration mobilizes sulfur from L-cysteine to yield L-alanine and constitutes an essential step in sulfur metabolism for biosynthesis of a variety of sulfur-containing biomolecules. Functions as a sulfur acceptor for SufS, by mediating the direct transfer of the sulfur atom from the S-sulfanylcysteine of SufS, an intermediate product of cysteine desulfuration process. The protein is Cysteine desulfuration protein SufE of Escherichia coli O157:H7.